The sequence spans 693 residues: Polyphosphate kinase (693 aa).

Asn-57 provides a ligand contact to ATP. Residues Arg-383 and Arg-413 each contribute to the Mg(2+) site. The active-site Phosphohistidine intermediate is the His-443. Residues Tyr-476, Arg-572, and His-601 each contribute to the ATP site.

It belongs to the polyphosphate kinase 1 (PPK1) family. Requires Mg(2+) as cofactor. Post-translationally, an intermediate of this reaction is the autophosphorylated ppk in which a phosphate is covalently linked to a histidine residue through a N-P bond.

The catalysed reaction is [phosphate](n) + ATP = [phosphate](n+1) + ADP. Functionally, catalyzes the reversible transfer of the terminal phosphate of ATP to form a long-chain polyphosphate (polyP). This is Polyphosphate kinase from Acinetobacter baumannii (strain ATCC 17978 / DSM 105126 / CIP 53.77 / LMG 1025 / NCDC KC755 / 5377).